The primary structure comprises 361 residues: Eukaryotic translation initiation factor 3 subunit F (361 aa).

Low complexity-rich tracts occupy residues 1 to 11 and 21 to 42; these read MATPVVSASGP and AAPA…AAAV. Residues 1 to 42 are disordered; sequence MATPVVSASGPPATPAPAPVAAPASASASVPAPTPAPAAAAV. At A2 the chain carries N-acetylalanine. S50 carries the post-translational modification Phosphoserine; by CDK11; in vitro. Low complexity predominate over residues 55–78; it reads AAAATTAAPGQTPASAQAPAQTPA. A disordered region spans residues 55-86; that stretch reads AAAATTAAPGQTPASAQAPAQTPAPALPGPAL. One can recognise an MPN domain in the interval 96–226; it reads VRLHPVILAS…IKAYVSTLMG (131 aa). Residue K242 is modified to N6-acetyllysine. The residue at position 262 (S262) is a Phosphoserine.

The protein belongs to the eIF-3 subunit F family. As to quaternary structure, component of the eukaryotic translation initiation factor 3 (eIF-3) complex, which is composed of 13 subunits: EIF3A, EIF3B, EIF3C, EIF3D, EIF3E, EIF3F, EIF3G, EIF3H, EIF3I, EIF3J, EIF3K, EIF3L and EIF3M. The eIF-3 complex appears to include 3 stable modules: module A is composed of EIF3A, EIF3B, EIF3G and EIF3I; module B is composed of EIF3F, EIF3H, and EIF3M; and module C is composed of EIF3C, EIF3D, EIF3E, EIF3K and EIF3L. EIF3C of module C binds EIF3B of module A and EIF3H of module B, thereby linking the three modules. EIF3J is a labile subunit that binds to the eIF-3 complex via EIF3B. The eIF-3 complex interacts with RPS6KB1 under conditions of nutrient depletion. Mitogenic stimulation leads to binding and activation of a complex composed of MTOR and RPTOR, leading to phosphorylation and release of RPS6KB1 and binding of EIF4B to eIF-3. Interacts with RNF139; the interaction leads to protein translation inhibitions in a ubiquitination-dependent manner. Interacts with DTX1, the interaction is required for deubiquitinating activity towards NOTCH1. In terms of processing, phosphorylation is enhanced upon serum stimulation. Phosphorylated during apoptosis by caspase-processed CDK11.

The protein resides in the cytoplasm. The catalysed reaction is Thiol-dependent hydrolysis of ester, thioester, amide, peptide and isopeptide bonds formed by the C-terminal Gly of ubiquitin (a 76-residue protein attached to proteins as an intracellular targeting signal).. Its function is as follows. Component of the eukaryotic translation initiation factor 3 (eIF-3) complex, which is required for several steps in the initiation of protein synthesis. The eIF-3 complex associates with the 40S ribosome and facilitates the recruitment of eIF-1, eIF-1A, eIF-2:GTP:methionyl-tRNAi and eIF-5 to form the 43S pre-initiation complex (43S PIC). The eIF-3 complex stimulates mRNA recruitment to the 43S PIC and scanning of the mRNA for AUG recognition. The eIF-3 complex is also required for disassembly and recycling of post-termination ribosomal complexes and subsequently prevents premature joining of the 40S and 60S ribosomal subunits prior to initiation. The eIF-3 complex specifically targets and initiates translation of a subset of mRNAs involved in cell proliferation, including cell cycling, differentiation and apoptosis, and uses different modes of RNA stem-loop binding to exert either translational activation or repression. Functionally, deubiquitinates activated NOTCH1, promoting its nuclear import, thereby acting as a positive regulator of Notch signaling. The protein is Eukaryotic translation initiation factor 3 subunit F of Macaca fascicularis (Crab-eating macaque).